The primary structure comprises 172 residues: 3-hydroxydecanoyl-[acyl-carrier-protein] dehydratase (172 aa).

H71 is a catalytic residue.

Belongs to the thioester dehydratase family. FabA subfamily. As to quaternary structure, homodimer.

The protein localises to the cytoplasm. The catalysed reaction is a (3R)-hydroxyacyl-[ACP] = a (2E)-enoyl-[ACP] + H2O. The enzyme catalyses (3R)-hydroxydecanoyl-[ACP] = (2E)-decenoyl-[ACP] + H2O. It carries out the reaction (2E)-decenoyl-[ACP] = (3Z)-decenoyl-[ACP]. It functions in the pathway lipid metabolism; fatty acid biosynthesis. Functionally, necessary for the introduction of cis unsaturation into fatty acids. Catalyzes the dehydration of (3R)-3-hydroxydecanoyl-ACP to E-(2)-decenoyl-ACP and then its isomerization to Z-(3)-decenoyl-ACP. Can catalyze the dehydratase reaction for beta-hydroxyacyl-ACPs with saturated chain lengths up to 16:0, being most active on intermediate chain length. This is 3-hydroxydecanoyl-[acyl-carrier-protein] dehydratase from Escherichia fergusonii (strain ATCC 35469 / DSM 13698 / CCUG 18766 / IAM 14443 / JCM 21226 / LMG 7866 / NBRC 102419 / NCTC 12128 / CDC 0568-73).